Consider the following 96-residue polypeptide: UPF0235 protein Sputw3181_1321 (96 aa).

Belongs to the UPF0235 family.

The polypeptide is UPF0235 protein Sputw3181_1321 (Shewanella sp. (strain W3-18-1)).